Consider the following 735-residue polypeptide: Exocyst complex component 7 (735 aa).

Coiled coils occupy residues 5–42 (QEAS…TKNM) and 63–85 (VHKQ…SCLD). Phosphoserine is present on serine 133. The segment at 239-268 (HKSSSSSGVPYSPAIPNKRKDTPTKKPVKR) is disordered.

The protein belongs to the EXO70 family. The exocyst complex is composed of EXOC1, EXOC2, EXOC3, EXOC4, EXOC5, EXOC6, EXOC7 and EXOC8. Interacts with ARHQ in a GTP-dependent manner. Interacts with RAB11FIP3. In terms of tissue distribution, abundant in the ventricular zone, the outer subventricular zone and the cortical plate of the fetal cortex.

It is found in the cytoplasm. It localises to the cytosol. The protein localises to the cell membrane. Its subcellular location is the midbody. The protein resides in the midbody ring. Functionally, component of the exocyst complex involved in the docking of exocytic vesicles with fusion sites on the plasma membrane. In adipocytes, plays a crucial role in targeting SLC2A4 vesicle to the plasma membrane in response to insulin, perhaps directing the vesicle to the precise site of fusion. It is required for neuron survival and plays an essential role in cortical development. The protein is Exocyst complex component 7 (EXOC7) of Homo sapiens (Human).